The chain runs to 94 residues: Long neurotoxin-like OH-31 (94 aa).

Positions 1–19 are cleaved as a signal peptide; that stretch reads MKTLLLTLVVVTILCLDLG. 4 cysteine pairs are disulfide-bonded: cysteine 35-cysteine 55, cysteine 37-cysteine 66, cysteine 70-cysteine 81, and cysteine 82-cysteine 87.

This sequence belongs to the three-finger toxin family. Long-chain subfamily. Type II alpha-neurotoxin sub-subfamily. Expressed by the venom gland.

The protein localises to the secreted. Its function is as follows. Binds with high affinity to muscular nicotinic acetylcholine receptors (nAChRs), whereas it binds with a low affinity to neuronal alpha-7/CHRNA7 nAChRs. The chain is Long neurotoxin-like OH-31 from Ophiophagus hannah (King cobra).